We begin with the raw amino-acid sequence, 466 residues long: UDP-N-acetylmuramoylalanine--D-glutamate ligase (466 aa).

122–128 (GTNGKTT) provides a ligand contact to ATP.

The protein belongs to the MurCDEF family.

The protein localises to the cytoplasm. It catalyses the reaction UDP-N-acetyl-alpha-D-muramoyl-L-alanine + D-glutamate + ATP = UDP-N-acetyl-alpha-D-muramoyl-L-alanyl-D-glutamate + ADP + phosphate + H(+). It participates in cell wall biogenesis; peptidoglycan biosynthesis. Cell wall formation. Catalyzes the addition of glutamate to the nucleotide precursor UDP-N-acetylmuramoyl-L-alanine (UMA). This chain is UDP-N-acetylmuramoylalanine--D-glutamate ligase, found in Aromatoleum aromaticum (strain DSM 19018 / LMG 30748 / EbN1) (Azoarcus sp. (strain EbN1)).